An 83-amino-acid chain; its full sequence is Mu-theraphotoxin-Hhn2b 3 (83 aa).

The first 21 residues, 1–21, serve as a signal peptide directing secretion; sequence MKASMFLALAGLVLLFVVCYA. A propeptide spanning residues 22-48 is cleaved from the precursor; it reads SESEEKEFPRELISKIFAVDDFKGEVR. Intrachain disulfides connect Cys50–Cys65, Cys57–Cys70, and Cys64–Cys77. Leu81 carries the leucine amide modification.

Belongs to the neurotoxin 10 (Hwtx-1) family. 14 (Hntx-1) subfamily. As to quaternary structure, monomer. As to expression, expressed by the venom gland.

It localises to the secreted. Its function is as follows. Weakly blocks the rat SCN2A/SCN1B (Nav1.2/beta-1) sodium channel (IC(50)=68 uM) and the insect sodium channel para/tipE (IC(50)=4.3 uM), without altering the activation or inactivation kinetics (depressant toxin). This chain is Mu-theraphotoxin-Hhn2b 3, found in Cyriopagopus hainanus (Chinese bird spider).